A 525-amino-acid chain; its full sequence is Lysine--tRNA ligase (525 aa).

Residues Glu430 and Glu437 each contribute to the Mg(2+) site.

This sequence belongs to the class-II aminoacyl-tRNA synthetase family. Homodimer. Requires Mg(2+) as cofactor.

The protein localises to the cytoplasm. It catalyses the reaction tRNA(Lys) + L-lysine + ATP = L-lysyl-tRNA(Lys) + AMP + diphosphate. The sequence is that of Lysine--tRNA ligase from Chlamydia caviae (strain ATCC VR-813 / DSM 19441 / 03DC25 / GPIC) (Chlamydophila caviae).